We begin with the raw amino-acid sequence, 629 residues long: Chaperone protein HtpG (629 aa).

Residues Met-1–Arg-335 form an a; substrate-binding region. The interval Glu-336–Lys-547 is b. The interval Met-548 to Ser-629 is c.

This sequence belongs to the heat shock protein 90 family. Homodimer.

It localises to the cytoplasm. Functionally, molecular chaperone. Has ATPase activity. The polypeptide is Chaperone protein HtpG (Chlorobaculum tepidum (strain ATCC 49652 / DSM 12025 / NBRC 103806 / TLS) (Chlorobium tepidum)).